A 783-amino-acid polypeptide reads, in one-letter code: DNA polymerase II (783 aa).

This sequence belongs to the DNA polymerase type-B family.

It catalyses the reaction DNA(n) + a 2'-deoxyribonucleoside 5'-triphosphate = DNA(n+1) + diphosphate. Its activity is regulated as follows. DNA polymerase II activity is regulated by the lexA gene during the SOS response. Thought to be involved in DNA repair and/or mutagenesis. Its processivity is enhanced by the beta sliding clamp (dnaN) and clamp loader. The chain is DNA polymerase II (polB) from Escherichia coli (strain K12).